Reading from the N-terminus, the 247-residue chain is VQ motif-containing protein 4 (247 aa).

A disordered region spans residues 1 to 128; the sequence is MENSPRYREA…SSSSASGFRL (128 aa). At Ser16 the chain carries Phosphoserine. The span at 21–37 shows a compositional bias: low complexity; sequence NSNNSCGMSSSSESNKP. 2 stretches are compositionally biased toward polar residues: residues 48-75 and 87-106; these read RSESGNPYPTTFVQADTSSFKQVVQMLT and LKPNPTHHQPDPRSTPSSFS. Residues 67–76 carry the VQ motif; sequence FKQVVQMLTG. Phosphoserine is present on residues Ser106, Ser155, Ser163, Ser165, and Ser175. At Thr178 the chain carries Phosphothreonine. A disordered region spans residues 184–247; the sequence is PFDRSGSSNQ…VSGSSSASTS (64 aa). The residue at position 194 (Ser194) is a Phosphoserine. Positions 200–210 are enriched in basic and acidic residues; the sequence is AEEKAMKERGF. Residue Ser215 is modified to Phosphoserine. A phosphothreonine mark is found at Thr219 and Thr234. A phosphoserine mark is found at Ser235, Ser239, and Ser243. Over residues 236 to 247 the composition is skewed to polar residues; it reads PRVSGSSSASTS.

Interacts with MPK3 and MPK6. In terms of processing, phosphorylated on serine and threonine residues by MPK6 following treatment with the pathogen-associated molecular pattern (PAMP) flg22. MAP kinase-mediated phosphorylation after PAMP elicitation causes degradation of VQ4, allowing WRKY33 to promote transcription from defense genes.

The protein resides in the nucleus. In terms of biological role, acts as a negative regulator of WRKY33 transcription factor activity in the promotion of defense gene expression. Acts as a negative regulator of pathogen-associated molecular pattern (PAMP)-induced responses to modulate resistance to pathogens. The chain is VQ motif-containing protein 4 from Arabidopsis thaliana (Mouse-ear cress).